Reading from the N-terminus, the 150-residue chain is Deoxyuridine 5'-triphosphate nucleotidohydrolase (150 aa).

Residues 69-71, N82, and 86-88 each bind substrate; these read RSG and TID.

This sequence belongs to the dUTPase family. It depends on Mg(2+) as a cofactor.

The catalysed reaction is dUTP + H2O = dUMP + diphosphate + H(+). Its pathway is pyrimidine metabolism; dUMP biosynthesis; dUMP from dCTP (dUTP route): step 2/2. Its function is as follows. This enzyme is involved in nucleotide metabolism: it produces dUMP, the immediate precursor of thymidine nucleotides and it decreases the intracellular concentration of dUTP so that uracil cannot be incorporated into DNA. In Syntrophus aciditrophicus (strain SB), this protein is Deoxyuridine 5'-triphosphate nucleotidohydrolase.